The chain runs to 380 residues: Chaperone protein DnaJ (380 aa).

The J domain maps to 5–70 (DYYEVLGVSK…QKRQTYDQYG (66 aa)). Residues 136-214 (GKEVEIKIPT…CHGQGRVEKT (79 aa)) form a CR-type zinc finger. C149, C152, C166, C169, C188, C191, C202, and C205 together coordinate Zn(2+). CXXCXGXG motif repeat units follow at residues 149–156 (CDPCDGSG), 166–173 (CTTCHGAG), 188–195 (CPTCQGQG), and 202–209 (CDSCHGQG).

The protein belongs to the DnaJ family. As to quaternary structure, homodimer. Zn(2+) is required as a cofactor.

Its subcellular location is the cytoplasm. Its function is as follows. Participates actively in the response to hyperosmotic and heat shock by preventing the aggregation of stress-denatured proteins and by disaggregating proteins, also in an autonomous, DnaK-independent fashion. Unfolded proteins bind initially to DnaJ; upon interaction with the DnaJ-bound protein, DnaK hydrolyzes its bound ATP, resulting in the formation of a stable complex. GrpE releases ADP from DnaK; ATP binding to DnaK triggers the release of the substrate protein, thus completing the reaction cycle. Several rounds of ATP-dependent interactions between DnaJ, DnaK and GrpE are required for fully efficient folding. Also involved, together with DnaK and GrpE, in the DNA replication of plasmids through activation of initiation proteins. The polypeptide is Chaperone protein DnaJ (Pseudoalteromonas translucida (strain TAC 125)).